A 351-amino-acid polypeptide reads, in one-letter code: Methionine import ATP-binding protein MetN (351 aa).

Positions 4–249 (VQLDHVSVTF…PKAELTQKFV (246 aa)) constitute an ABC transporter domain. 41–48 (GFSGAGKS) lines the ATP pocket.

This sequence belongs to the ABC transporter superfamily. Methionine importer (TC 3.A.1.24) family. The complex is composed of two ATP-binding proteins (MetN), two transmembrane proteins (MetI) and a solute-binding protein (MetQ).

It localises to the cell membrane. The catalysed reaction is L-methionine(out) + ATP + H2O = L-methionine(in) + ADP + phosphate + H(+). It catalyses the reaction D-methionine(out) + ATP + H2O = D-methionine(in) + ADP + phosphate + H(+). Functionally, part of the ABC transporter complex MetNIQ involved in methionine import. Responsible for energy coupling to the transport system. This is Methionine import ATP-binding protein MetN from Lactobacillus delbrueckii subsp. bulgaricus (strain ATCC 11842 / DSM 20081 / BCRC 10696 / JCM 1002 / NBRC 13953 / NCIMB 11778 / NCTC 12712 / WDCM 00102 / Lb 14).